The sequence spans 158 residues: Snaclec crotocetin-1 (158 aa).

The first 23 residues, Met-1–Ala-23, serve as a signal peptide directing secretion. 3 disulfides stabilise this stretch: Cys-27–Cys-38, Cys-55–Cys-152, and Cys-127–Cys-144. In terms of domain architecture, C-type lectin spans Tyr-34–Lys-153.

This sequence belongs to the snaclec family. Heterodimer; disulfide-linked. Expressed by the venom gland.

The protein localises to the secreted. In terms of biological role, interferes with one step of hemostasis (modulation of platelet aggregation, or coagulation cascade, for example). The polypeptide is Snaclec crotocetin-1 (Crotalus durissus terrificus (South American rattlesnake)).